The sequence spans 248 residues: Carbohydrate deacetylase 2 (248 aa).

Mg(2+) is bound by residues H59 and H123.

Belongs to the YdjC deacetylase family. In terms of assembly, homodimer. Requires Mg(2+) as cofactor.

Its function is as follows. Probably catalyzes the deacetylation of acetylated carbohydrates an important step in the degradation of oligosaccharides. In Listeria innocua serovar 6a (strain ATCC BAA-680 / CLIP 11262), this protein is Carbohydrate deacetylase 2.